A 493-amino-acid chain; its full sequence is Glutamyl-tRNA(Gln) amidotransferase subunit A (493 aa).

Catalysis depends on charge relay system residues lysine 78 and serine 158. Serine 182 acts as the Acyl-ester intermediate in catalysis.

It belongs to the amidase family. GatA subfamily. Heterotrimer of A, B and C subunits.

The catalysed reaction is L-glutamyl-tRNA(Gln) + L-glutamine + ATP + H2O = L-glutaminyl-tRNA(Gln) + L-glutamate + ADP + phosphate + H(+). Functionally, allows the formation of correctly charged Gln-tRNA(Gln) through the transamidation of misacylated Glu-tRNA(Gln) in organisms which lack glutaminyl-tRNA synthetase. The reaction takes place in the presence of glutamine and ATP through an activated gamma-phospho-Glu-tRNA(Gln). The sequence is that of Glutamyl-tRNA(Gln) amidotransferase subunit A from Rickettsia rickettsii (strain Iowa).